Reading from the N-terminus, the 185-residue chain is Ribosome-recycling factor (185 aa).

The protein belongs to the RRF family.

The protein resides in the cytoplasm. Its function is as follows. Responsible for the release of ribosomes from messenger RNA at the termination of protein biosynthesis. May increase the efficiency of translation by recycling ribosomes from one round of translation to another. In Geobacter sp. (strain M21), this protein is Ribosome-recycling factor.